A 341-amino-acid chain; its full sequence is Probable alcohol acetyltransferase (341 aa).

A mitochondrion-targeting transit peptide spans Met-1–His-40. Positions Pro-48–Arg-301 constitute an AB hydrolase-1 domain. Active-site charge relay system residues include Ser-121, Asp-145, and His-295.

It belongs to the AB hydrolase superfamily.

It is found in the mitochondrion. Functionally, probable alcohol acetyltransferase that uses acetyl-CoA to synthesize acetate esters from various alcohols. Not involved in the synthesis of ethyl acetate. This chain is Probable alcohol acetyltransferase (EAT2), found in Wickerhamomyces anomalus (strain ATCC 58044 / CBS 1984 / NCYC 433 / NRRL Y-366-8) (Yeast).